Here is a 102-residue protein sequence, read N- to C-terminus: MPIAVGTIQTLGFPPIIAAADAMVKAARVTITQYGLAESAQFFVSVRGPVSEVETAVEAGLKAVAETEGAELINYIVIPNPQENVETVMPIDFTAESEPFRS.

Residues 4-90 (AVGTIQTLGF…PQENVETVMP (87 aa)) form the BMC domain.

Belongs to the bacterial microcompartments protein family. CcmK subfamily. As to quaternary structure, interacts stably with CcmK4, probably forms heterohexamers with a 1:2 CcmK3:CcmK4 stoichiometry. Bulky residues in the pore region probably preclude the formation of homohexamers by this subunit.

The protein resides in the carboxysome. Functionally, a non-essential, minor shell protein of the carboxysome, a polyhedral inclusion where RuBisCO (ribulose bisphosphate carboxylase, rbcL-rbcS) is sequestered. Hexamers form sheets that form the facets of the polyhedral carboxysome. In PCC 7942 there are several CcmK paralogs with presumably functional differences. This subunit probably only makes heterohexamers with CcmK4. The CcmK3-CcmK4 heterohexmers have been suggested to cap other hexamers, perhaps to alter metabolite flux. The sequence is that of Carboxysome shell protein CcmK3 from Synechococcus elongatus (strain ATCC 33912 / PCC 7942 / FACHB-805) (Anacystis nidulans R2).